The primary structure comprises 284 residues: Tetraspanin-10 (284 aa).

Topologically, residues 1–11 (MGMGTSTFVIR) are cytoplasmic. The chain crosses the membrane as a helical span at residues 12-32 (WVNLLTMLLAVAVIIFGVWMS). At 33 to 43 (THNDGCRRSLT) the chain is on the extracellular side. The helical transmembrane segment at 44 to 64 (FPVIALGGFIFLISIIGFLGA) threads the bilayer. Residues 65–75 (CKRSVALLWIY) lie on the Cytoplasmic side of the membrane. A helical transmembrane segment spans residues 76–96 (LAVLLIVLIAILVFTVLAFIV). Topologically, residues 97-228 (TNNGSGHTNP…AGVAQYMKTE (132 aa)) are extracellular. 3 N-linked (GlcNAc...) asparagine glycosylation sites follow: Asn-99, Asn-128, and Asn-183. Residues 229–249 (WRLVAIFNVVLFVVLISSLLS) traverse the membrane as a helical segment. At 250–284 (TRFDSEQSFGLLNGLVQISNITFKDCQTTTVPKQF) the chain is on the cytoplasmic side.

It belongs to the tetraspanin (TM4SF) family.

It is found in the membrane. In terms of biological role, may be involved in the regulation of cell differentiation. The polypeptide is Tetraspanin-10 (TET10) (Arabidopsis thaliana (Mouse-ear cress)).